The sequence spans 288 residues: Beta-lactamase PSE-1 (288 aa).

Positions 1-17 (MKFLLAFSLLIPSVVFA) are cleaved as a signal peptide. The active-site Acyl-ester intermediate is the S65. A disulfide bridge connects residues C72 and C118. Residue 229–231 (RSG) participates in substrate binding.

The protein belongs to the class-A beta-lactamase family. Monomer.

It catalyses the reaction a beta-lactam + H2O = a substituted beta-amino acid. Inhibited by p-chloromercuribenzoate but not by cloxacillin. Functionally, hydrolyzes penicillin, ampicillin and carbenicillin but not other antibiotics including oxacillin, methicillin and cloxacillin. In Pseudomonas aeruginosa, this protein is Beta-lactamase PSE-1.